The sequence spans 297 residues: uncharacterized protein (297 aa).

The chain crosses the membrane as a helical span at residues 191–211 (VMIILSCSNITILAVLSIVGL). A compositionally biased stretch (polar residues) spans 275–287 (SKTSETQSVSGST). The disordered stretch occupies residues 275-297 (SKTSETQSVSGSTHSDEKLTAPM). Over residues 288-297 (HSDEKLTAPM) the composition is skewed to basic and acidic residues.

The protein localises to the host membrane. This is an uncharacterized protein from Cryphonectria parasitica mycoreovirus 1 (strain 9B21) (CpMYRV-1).